Reading from the N-terminus, the 344-residue chain is Type VI secretion system component TssA1 (344 aa).

As to quaternary structure, homododecamer. Interacts with TssB1 and TssC1. Interacts with TssK1 and TssF1.

Core component of the H1 type VI (H1-T6SS) secretion system that plays a role in the release of toxins targeting both eukaryotic and prokaryotic species. Forms a dodecameric ring-shaped structure located at one end of the T6SS sheath. May properly attach the pre-assembled sheath onto the baseplate and/or stabilize the sheaths tubular structure. The sequence is that of Type VI secretion system component TssA1 from Pseudomonas aeruginosa (strain ATCC 15692 / DSM 22644 / CIP 104116 / JCM 14847 / LMG 12228 / 1C / PRS 101 / PAO1).